Reading from the N-terminus, the 535-residue chain is MMDDDTELRTDGNSLLKAVWLGRLRLTRLLLEGGAYINESNDKGETALMVACITKHVDQQSISKSKMVKYLLDNRADPNIQDKSGKTALIHACIRRAGGEVVSLLLENGADPSLEDRTGASALVYAINADDKDALKHLLDACKAKGKEVIIITTDKSSSGTKTTKQYLNVPPSPKVEDRHSPPLCASPSDIELKALGLDSPLTEKEDDFFSLQAGHPSSCNTSKAVNEPGSPTRKVSNLKRARLPQLKRLQSEPWGLIAPSVLAASTRQDETHGASTDNEVIKSISDISFPKRGPLSRTNSIDSKDPTLFHTVTEQVLKIPVSSAPASWKAAYEKGQAPHPRLARRGTLPVDQEKCGMGPSGPSALKEPASLKWLENDLYDLDIQPGPDPPNSISLESGKGPLDRKKLNSSHLSLFHGSRESLDTVPSTSPSSARRRPPHLLERRGSGTLLLDRISHTRPGFLPPLNVNLNPPIPDIRSSSKPSCSLASGLKSMVPVAPSSPKRVDLRSKKKLLRRHSMQIEQMKQLSDFEEIMT.

4 ANK repeats span residues 10–39 (TDGN…YINE), 43–80 (KGET…DPNI), 84–114 (SGKT…DPSL), and 118–147 (TGAS…AKGK). Disordered stretches follow at residues 159-181 (SGTK…DRHS) and 214-237 (AGHP…RKVS). Positions 216-225 (HPSSCNTSKA) are enriched in polar residues. Ser-301 bears the Phosphoserine mark. A disordered region spans residues 381–444 (DLDIQPGPDP…RRRPPHLLER (64 aa)). A Phosphoserine modification is found at Ser-447.

It belongs to the ANKRD34 family.

In Homo sapiens (Human), this protein is Ankyrin repeat domain-containing protein 34C (ANKRD34C).